The primary structure comprises 373 residues: Phospho-N-acetylmuramoyl-pentapeptide-transferase (373 aa).

11 helical membrane passes run 16 to 36, 46 to 66, 93 to 113, 120 to 140, 157 to 177, 185 to 205, 216 to 236, 242 to 262, 270 to 290, 298 to 318, and 350 to 369; these read WWTK…AASF, LLSL…SWGI, PTMG…FVSV, QLLA…FDDW, LLLQ…QHWI, LGIS…VFLA, LDGL…VQLM, GNPV…GFLM, VFMG…VAIL, LVMG…VWVF, and MVVR…GLLL.

Belongs to the glycosyltransferase 4 family. MraY subfamily. It depends on Mg(2+) as a cofactor.

Its subcellular location is the cell inner membrane. The catalysed reaction is UDP-N-acetyl-alpha-D-muramoyl-L-alanyl-gamma-D-glutamyl-meso-2,6-diaminopimeloyl-D-alanyl-D-alanine + di-trans,octa-cis-undecaprenyl phosphate = di-trans,octa-cis-undecaprenyl diphospho-N-acetyl-alpha-D-muramoyl-L-alanyl-D-glutamyl-meso-2,6-diaminopimeloyl-D-alanyl-D-alanine + UMP. It participates in cell wall biogenesis; peptidoglycan biosynthesis. Catalyzes the initial step of the lipid cycle reactions in the biosynthesis of the cell wall peptidoglycan: transfers peptidoglycan precursor phospho-MurNAc-pentapeptide from UDP-MurNAc-pentapeptide onto the lipid carrier undecaprenyl phosphate, yielding undecaprenyl-pyrophosphoryl-MurNAc-pentapeptide, known as lipid I. The chain is Phospho-N-acetylmuramoyl-pentapeptide-transferase from Prochlorococcus marinus (strain MIT 9313).